Here is a 415-residue protein sequence, read N- to C-terminus: Serine hydroxymethyltransferase (415 aa).

Residues leucine 119 and 123 to 125 (GHL) contribute to the (6S)-5,6,7,8-tetrahydrofolate site. Lysine 228 carries the post-translational modification N6-(pyridoxal phosphate)lysine.

This sequence belongs to the SHMT family. Homodimer. Requires pyridoxal 5'-phosphate as cofactor.

It localises to the cytoplasm. It carries out the reaction (6R)-5,10-methylene-5,6,7,8-tetrahydrofolate + glycine + H2O = (6S)-5,6,7,8-tetrahydrofolate + L-serine. Its pathway is one-carbon metabolism; tetrahydrofolate interconversion. It functions in the pathway amino-acid biosynthesis; glycine biosynthesis; glycine from L-serine: step 1/1. Functionally, catalyzes the reversible interconversion of serine and glycine with tetrahydrofolate (THF) serving as the one-carbon carrier. This reaction serves as the major source of one-carbon groups required for the biosynthesis of purines, thymidylate, methionine, and other important biomolecules. Also exhibits THF-independent aldolase activity toward beta-hydroxyamino acids, producing glycine and aldehydes, via a retro-aldol mechanism. This Coprothermobacter proteolyticus (strain ATCC 35245 / DSM 5265 / OCM 4 / BT) protein is Serine hydroxymethyltransferase.